The primary structure comprises 502 residues: Type-2 serine--tRNA ligase (502 aa).

Alanine 304 provides a ligand contact to L-serine. Cysteine 306 provides a ligand contact to Zn(2+). Arginine 336 provides a ligand contact to L-serine. Residues 336–338 (RYE) and 347–348 (RV) each bind ATP. Residues 353-355 (RVE) and glutamine 400 each bind L-serine. Glutamate 355 contributes to the Zn(2+) binding site. Glutamate 432 lines the ATP pocket. Asparagine 435 is a binding site for L-serine. Cysteine 461 contacts Zn(2+). Arginine 468 is a binding site for ATP.

This sequence belongs to the class-II aminoacyl-tRNA synthetase family. Type-2 seryl-tRNA synthetase subfamily. In terms of assembly, homodimer. It depends on Zn(2+) as a cofactor.

The protein resides in the cytoplasm. The enzyme catalyses tRNA(Ser) + L-serine + ATP = L-seryl-tRNA(Ser) + AMP + diphosphate + H(+). The catalysed reaction is tRNA(Sec) + L-serine + ATP = L-seryl-tRNA(Sec) + AMP + diphosphate + H(+). The protein operates within aminoacyl-tRNA biosynthesis; selenocysteinyl-tRNA(Sec) biosynthesis; L-seryl-tRNA(Sec) from L-serine and tRNA(Sec): step 1/1. Functionally, catalyzes the attachment of serine to tRNA(Ser). Is also able to aminoacylate tRNA(Sec) with serine, to form the misacylated tRNA L-seryl-tRNA(Sec), which will be further converted into selenocysteinyl-tRNA(Sec). This chain is Type-2 serine--tRNA ligase, found in Methanococcoides burtonii (strain DSM 6242 / NBRC 107633 / OCM 468 / ACE-M).